We begin with the raw amino-acid sequence, 300 residues long: Phosphatidylglycerol--prolipoprotein diacylglyceryl transferase (300 aa).

7 consecutive transmembrane segments (helical) span residues 17 to 37 (LAIR…LWFG), 59 to 79 (MLFY…VLFY), 94 to 114 (VWEG…AMML), 129 to 149 (FIAP…FING), 204 to 224 (SQIY…WLYA), 230 to 250 (MGAV…AAEF), and 265 to 285 (LSMG…MLVW). Residue Arg142 coordinates a 1,2-diacyl-sn-glycero-3-phospho-(1'-sn-glycerol).

It belongs to the Lgt family.

The protein localises to the cell inner membrane. It catalyses the reaction L-cysteinyl-[prolipoprotein] + a 1,2-diacyl-sn-glycero-3-phospho-(1'-sn-glycerol) = an S-1,2-diacyl-sn-glyceryl-L-cysteinyl-[prolipoprotein] + sn-glycerol 1-phosphate + H(+). Its pathway is protein modification; lipoprotein biosynthesis (diacylglyceryl transfer). In terms of biological role, catalyzes the transfer of the diacylglyceryl group from phosphatidylglycerol to the sulfhydryl group of the N-terminal cysteine of a prolipoprotein, the first step in the formation of mature lipoproteins. This is Phosphatidylglycerol--prolipoprotein diacylglyceryl transferase from Ralstonia pickettii (strain 12J).